Here is a 413-residue protein sequence, read N- to C-terminus: E3 ubiquitin ligase ICP22 (413 aa).

Residues 1 to 124 (MADIPPDPPA…PPRKSKRPRI (124 aa)) are disordered. Over residues 62–76 (GDLRGGRRRSPRELG) the composition is skewed to basic and acidic residues. Positions 84 to 97 (SAESTTGTESEGTG) are enriched in low complexity. Y189 bears the Phosphotyrosine; by host mark. 2 disordered regions span residues 289 to 334 (LETN…SASG) and 370 to 390 (AERSGLPAPGACRATEAPERE). The span at 297–309 (SDDEISDATDSDD) shows a compositional bias: acidic residues.

The protein belongs to the herpesviridae ICP22 family. In terms of processing, tyrosine phosphorylated.

The protein localises to the host nucleus. The protein operates within protein modification; protein ubiquitination. Functions as an E3 ubiquitin ligase and plays a role in the inhibition of innate immunity by preventing IFN-mediated signaling. Induces the ubiquitination and degradation of host STAT1, STAT2 and IRF9, resulting in the blockade of ISGF3 nuclear translocation. The protein is E3 ubiquitin ligase ICP22 of Human herpesvirus 2 (strain HG52) (HHV-2).